Consider the following 303-residue polypeptide: tRNA (guanine-N(7)-)-methyltransferase (303 aa).

Positions 1 to 64 are disordered; sequence MPKPHQVQVI…STSDKISLPR (64 aa). Residues 10–38 show a composition bias toward basic and acidic residues; it reads IKDRETQLREQQEAESKRRTYRDVKEETR. Residues G118, 141 to 142, 177 to 178, and C197 contribute to the S-adenosyl-L-methionine site; these read EI and NA. D200 is a catalytic residue. Residue 275–277 coordinates S-adenosyl-L-methionine; sequence TEE.

This sequence belongs to the class I-like SAM-binding methyltransferase superfamily. TrmB family. Forms a complex with TRM82.

It is found in the nucleus. It catalyses the reaction guanosine(46) in tRNA + S-adenosyl-L-methionine = N(7)-methylguanosine(46) in tRNA + S-adenosyl-L-homocysteine. Its pathway is tRNA modification; N(7)-methylguanine-tRNA biosynthesis. Its function is as follows. Catalyzes the formation of N(7)-methylguanine at position 46 (m7G46) in tRNA. The protein is tRNA (guanine-N(7)-)-methyltransferase of Scheffersomyces stipitis (strain ATCC 58785 / CBS 6054 / NBRC 10063 / NRRL Y-11545) (Yeast).